A 160-amino-acid polypeptide reads, in one-letter code: Glyoxalase domain-containing protein 5 (160 aa).

Residues 37–157 enclose the VOC domain; the sequence is RLDHIVMTVK…DRNLIEVSNY (121 aa).

This sequence belongs to the glyoxalase I family.

The sequence is that of Glyoxalase domain-containing protein 5 (GLOD5) from Homo sapiens (Human).